The primary structure comprises 276 residues: 4-deoxy-L-threo-5-hexosulose-uronate ketol-isomerase (276 aa).

Residues histidine 194, histidine 196, glutamate 201, and histidine 243 each coordinate Zn(2+).

The protein belongs to the KduI family. It depends on Zn(2+) as a cofactor.

The enzyme catalyses 5-dehydro-4-deoxy-D-glucuronate = 3-deoxy-D-glycero-2,5-hexodiulosonate. The protein operates within glycan metabolism; pectin degradation; 2-dehydro-3-deoxy-D-gluconate from pectin: step 4/5. Catalyzes the isomerization of 5-dehydro-4-deoxy-D-glucuronate to 3-deoxy-D-glycero-2,5-hexodiulosonate. In Lachnoclostridium phytofermentans (strain ATCC 700394 / DSM 18823 / ISDg) (Clostridium phytofermentans), this protein is 4-deoxy-L-threo-5-hexosulose-uronate ketol-isomerase.